The following is a 103-amino-acid chain: Large ribosomal subunit protein bL21 (103 aa).

Belongs to the bacterial ribosomal protein bL21 family. Part of the 50S ribosomal subunit. Contacts protein L20.

Its function is as follows. This protein binds to 23S rRNA in the presence of protein L20. The polypeptide is Large ribosomal subunit protein bL21 (Lactobacillus helveticus (strain DPC 4571)).